Reading from the N-terminus, the 325-residue chain is Thiamine-monophosphate kinase (325 aa).

Mg(2+) contacts are provided by D30, S45, T46, and D47. H54 lines the substrate pocket. 2 residues coordinate Mg(2+): D75 and D122. ATP-binding positions include 121 to 122 (GD) and R146. D212 is a Mg(2+) binding site. S214 provides a ligand contact to ATP. Mg(2+) is bound at residue D215. Residues E263 and Y319 each coordinate substrate.

This sequence belongs to the thiamine-monophosphate kinase family.

The catalysed reaction is thiamine phosphate + ATP = thiamine diphosphate + ADP. It functions in the pathway cofactor biosynthesis; thiamine diphosphate biosynthesis; thiamine diphosphate from thiamine phosphate: step 1/1. In terms of biological role, catalyzes the ATP-dependent phosphorylation of thiamine-monophosphate (TMP) to form thiamine-pyrophosphate (TPP), the active form of vitamin B1. The sequence is that of Thiamine-monophosphate kinase from Escherichia coli O157:H7.